Here is a 190-residue protein sequence, read N- to C-terminus: Putative hydrolase YdeN (190 aa).

Residues S71, D137, and H164 each act as charge relay system in the active site.

This sequence belongs to the RBBP9 family.

This chain is Putative hydrolase YdeN (ydeN), found in Bacillus subtilis (strain 168).